Here is a 682-residue protein sequence, read N- to C-terminus: Glutamine--fructose-6-phosphate aminotransferase [isomerizing] 2 (682 aa).

The For GATase activity role is filled by Cys-2. In terms of domain architecture, Glutamine amidotransferase type-2 spans 2–288 (CGIFAYMNYR…DDDIAAVADG (287 aa)). A Phosphoserine modification is found at Ser-244. 2 consecutive SIS domains span residues 360-499 (HLKE…DRIS) and 531-672 (LALE…VDFP). Residues 377–378 (TS), 422–424 (SQS), Thr-427, and His-578 each bind substrate.

Highest levels of expression in heart, placenta, and spinal cord.

The enzyme catalyses D-fructose 6-phosphate + L-glutamine = D-glucosamine 6-phosphate + L-glutamate. It participates in nucleotide-sugar biosynthesis; UDP-N-acetyl-alpha-D-glucosamine biosynthesis; alpha-D-glucosamine 6-phosphate from D-fructose 6-phosphate: step 1/1. In terms of biological role, controls the flux of glucose into the hexosamine pathway. Most likely involved in regulating the availability of precursors for N- and O-linked glycosylation of proteins. This is Glutamine--fructose-6-phosphate aminotransferase [isomerizing] 2 (GFPT2) from Homo sapiens (Human).